Consider the following 146-residue polypeptide: Cytochrome c oxidase assembly factor 1 homolog (146 aa).

The Mitochondrial matrix segment spans residues Met-1–Pro-14. Residues Leu-15 to Ile-37 form a helical membrane-spanning segment. Topologically, residues Gln-38 to Glu-146 are mitochondrial intermembrane.

This sequence belongs to the COA1 family. As to quaternary structure, component of the MITRAC (mitochondrial translation regulation assembly intermediate of cytochrome c oxidase complex) complex, the core components of this complex being COA3/MITRAC12 and COX14. Interacts with COX17 and COA6. Part of the mitochondrial complex I assembly/MCIA complex that comprises at least the core subunits TMEM126B, NDUFAF1, ECSIT and ACAD9 and complement subunits such as COA1 and TMEM186.

The protein resides in the mitochondrion inner membrane. Functionally, component of the MITRAC (mitochondrial translation regulation assembly intermediate of cytochrome c oxidase complex) complex, that regulates cytochrome c oxidase assembly. MITRAC complexes regulate both translation of mitochondrial encoded components and assembly of nuclear-encoded components imported in mitochondrion. Required for assembly of mitochondrial respiratory chain complex I and complex IV. As part of the MCIA complex, required for efficient assembly of the mitochondrial complex I. The polypeptide is Cytochrome c oxidase assembly factor 1 homolog (Homo sapiens (Human)).